Reading from the N-terminus, the 457-residue chain is MITKEFDTIAAISTPLGEGAIGIVRLSGTDAFAIASTVFKGKDLATVPSHSLNYGHAIDPATGQVLDEVMIGAMRSPKTFTREDVIEINTHGGIAVTNEILQLLIRQGARMAEPGEFTKRAFLNGRVDLTQAEAVMDVIRAKTDKAMHNAVRQLDGSLSQLINDTRQEILNTLAQVEVNIDYPEYDDVEEATTELVREKTLQFQALLENLLRTARRGKILREGIATAIIGRPNVGKSSLLNNLLREEKAIVTDIAGTTRDVIEEYVNIKGVPLKLIDTAGIRETDDIVEKIGVERSKKALEEADLILLVLNASEPLTEQDRNLLAISDMANRIVLLNKTDLEEQIEVDQLPEDVIRISVLQNQNIDQIEEKINQLFFENAGLVEQDATYLSNSRHISLIEQAVQSLHAVNDGLKVGMPVDLLQVDLTRCWQILGEITGDAAPDELITQLFSQFCLGK.

(6S)-5-formyl-5,6,7,8-tetrahydrofolate contacts are provided by Arg25, Glu87, and Arg126. Residues 223-377 (GIATAIIGRP…IEEKINQLFF (155 aa)) form the TrmE-type G domain. Asn233 is a K(+) binding site. Residues 233–238 (NVGKSS), 252–258 (TDIAGTT), and 277–280 (DTAG) contribute to the GTP site. Ser237 provides a ligand contact to Mg(2+). Residues Thr252, Ile254, and Thr257 each contribute to the K(+) site. Thr258 is a Mg(2+) binding site. Lys457 is a binding site for (6S)-5-formyl-5,6,7,8-tetrahydrofolate.

Belongs to the TRAFAC class TrmE-Era-EngA-EngB-Septin-like GTPase superfamily. TrmE GTPase family. Homodimer. Heterotetramer of two MnmE and two MnmG subunits. K(+) is required as a cofactor.

The protein resides in the cytoplasm. In terms of biological role, exhibits a very high intrinsic GTPase hydrolysis rate. Involved in the addition of a carboxymethylaminomethyl (cmnm) group at the wobble position (U34) of certain tRNAs, forming tRNA-cmnm(5)s(2)U34. The sequence is that of tRNA modification GTPase MnmE from Streptococcus suis (strain 98HAH33).